We begin with the raw amino-acid sequence, 213 residues long: Thiopurine S-methyltransferase (213 aa).

S-adenosyl-L-methionine contacts are provided by Trp-10, Met-45, Glu-66, and Arg-120.

The protein belongs to the class I-like SAM-binding methyltransferase superfamily. TPMT family.

The protein resides in the cytoplasm. It carries out the reaction S-adenosyl-L-methionine + a thiopurine = S-adenosyl-L-homocysteine + a thiopurine S-methylether.. In Photobacterium profundum (strain SS9), this protein is Thiopurine S-methyltransferase.